Consider the following 143-residue polypeptide: Ribonuclease VapC33 (143 aa).

Mg(2+) is bound by residues Asp5 and Asp108.

It belongs to the PINc/VapC protein family. Mg(2+) is required as a cofactor.

Functionally, toxic component of a type II toxin-antitoxin (TA) system. An RNase. Its toxic effect is neutralized by coexpression with cognate antitoxin VapB33. In Mycobacterium tuberculosis (strain CDC 1551 / Oshkosh), this protein is Ribonuclease VapC33.